The following is a 158-amino-acid chain: 6,7-dimethyl-8-ribityllumazine synthase (158 aa).

Residues phenylalanine 22, 57 to 59, and 81 to 83 contribute to the 5-amino-6-(D-ribitylamino)uracil site; these read AFE and AVI. 86–87 contributes to the (2S)-2-hydroxy-3-oxobutyl phosphate binding site; the sequence is GT. The Proton donor role is filled by histidine 89. A 5-amino-6-(D-ribitylamino)uracil-binding site is contributed by phenylalanine 114. Arginine 128 is a binding site for (2S)-2-hydroxy-3-oxobutyl phosphate.

It belongs to the DMRL synthase family. As to quaternary structure, forms an icosahedral capsid composed of 60 subunits, arranged as a dodecamer of pentamers.

The enzyme catalyses (2S)-2-hydroxy-3-oxobutyl phosphate + 5-amino-6-(D-ribitylamino)uracil = 6,7-dimethyl-8-(1-D-ribityl)lumazine + phosphate + 2 H2O + H(+). It functions in the pathway cofactor biosynthesis; riboflavin biosynthesis; riboflavin from 2-hydroxy-3-oxobutyl phosphate and 5-amino-6-(D-ribitylamino)uracil: step 1/2. Functionally, catalyzes the formation of 6,7-dimethyl-8-ribityllumazine by condensation of 5-amino-6-(D-ribitylamino)uracil with 3,4-dihydroxy-2-butanone 4-phosphate. This is the penultimate step in the biosynthesis of riboflavin. The polypeptide is 6,7-dimethyl-8-ribityllumazine synthase (Shewanella amazonensis (strain ATCC BAA-1098 / SB2B)).